We begin with the raw amino-acid sequence, 203 residues long: MARFRGSITKVSRRLGIALSPKAEKYLERRPYAPGQHGQSRRGKVSEYALQLREKQKMKYLYGILEKQFRNYYKKAVAQRGVTGDNLVKMLERRLDNVVYRCGFSPSRAGARQLVTHGHMLVNGKKVNIPSFLVSPGDQIEFRQKSRNLDAVADSLNKVPDSRIPEWIQVDKANRKAVFLAIPEREAVQEPFNEQLVVELYSK.

The 62-residue stretch at 93–154 (RRLDNVVYRC…KSRNLDAVAD (62 aa)) folds into the S4 RNA-binding domain.

Belongs to the universal ribosomal protein uS4 family. As to quaternary structure, part of the 30S ribosomal subunit. Contacts protein S5. The interaction surface between S4 and S5 is involved in control of translational fidelity.

Its function is as follows. One of the primary rRNA binding proteins, it binds directly to 16S rRNA where it nucleates assembly of the body of the 30S subunit. In terms of biological role, with S5 and S12 plays an important role in translational accuracy. The polypeptide is Small ribosomal subunit protein uS4 (Chlorobaculum tepidum (strain ATCC 49652 / DSM 12025 / NBRC 103806 / TLS) (Chlorobium tepidum)).